We begin with the raw amino-acid sequence, 244 residues long: uncharacterized protein (244 aa).

Positions 1 to 19 (MRGIFFLILILNFIGLIFS) are cleaved as a signal peptide. N-linked (GlcNAc...) asparagine glycans are attached at residues N45 and N77. ShKT domains lie at 67–105 (CNNPQPDTTLNCTALAGECNSALFSELMKEKCPATCGKC) and 113–149 (CSDKSKPDICVNLKTLCNSVEFYDKLSEQCPSTCNRC). Intrachain disulfides connect C113–C149, C122–C142, and C129–C146. 2 N-linked (GlcNAc...) asparagine glycosylation sites follow: N152 and N158. ShKT domains lie at 171 to 205 (CTDLANDCSYNQNRCSVKEYSSLMHRLCPKTCNAC) and 208 to 243 (CEDANKMCPIWVPRGFCSKFDHDKVQKSCAKSCNIC). Cystine bridges form between C171-C205, C178-C198, C185-C202, C208-C243, C215-C236, and C224-C240.

This is an uncharacterized protein from Caenorhabditis elegans.